The chain runs to 23 residues: Alpha-amanitin proprotein (23 aa).

I1 carries the post-translational modification (3R,4R)-4,5-dihydroxyisoleucine; in form alpha-amanitin. I1 carries the (3R,4S)-4-hydroxyisoleucine; in form gamma-amanitin modification. Residues 1–8 constitute a cross-link (cyclopeptide (Ile-Pro)); sequence IWGIGCNP. The 2'-cysteinyl-6'-hydroxytryptophan sulfoxide (Trp-Cys) cross-link spans 2-6; sequence WGIGC. P8 is modified (4-hydroxyproline). A propeptide spanning residues 9 to 23 is cleaved from the precursor; sequence CVGDEVTALITRGEA.

This sequence belongs to the MSDIN fungal toxin family. Post-translationally, processed by the macrocyclase-peptidase enzyme POPB to yield a toxic cyclic decapeptide. POPB first removes 10 residues from the N-terminus. Conformational trapping of the remaining peptide forces the enzyme to release this intermediate rather than proceed to macrocyclization. The enzyme rebinds the remaining peptide in a different conformation and catalyzes macrocyclization of the N-terminal 8 residues.

Major toxin belonging to the bicyclic octapeptides amatoxins that acts by binding non-competitively to RNA polymerase II and greatly slowing the elongation of transcripts from target promoters. In Amanita fuligineoides, this protein is Alpha-amanitin proprotein.